The following is a 250-amino-acid chain: Large ribosomal subunit protein uL30 (250 aa).

It belongs to the universal ribosomal protein uL30 family.

This is Large ribosomal subunit protein uL30 (RPL7) from Yarrowia lipolytica (strain CLIB 122 / E 150) (Yeast).